The following is a 37-amino-acid chain: Translationally-controlled tumor protein homolog (37 aa).

The region spanning 1-37 (MKIFRDILTNAEVVXDNDKPMDVLDEIVYAXQGRYIE) is the TCTP domain.

It belongs to the TCTP family. In terms of assembly, monomer.

Its subcellular location is the cytoplasm. Binds calcium; exact function not known. The sequence is that of Translationally-controlled tumor protein homolog from Trypanosoma brucei brucei.